The primary structure comprises 177 residues: Large ribosomal subunit protein uL6 (177 aa).

As to quaternary structure, part of the 50S ribosomal subunit.

Functionally, this protein binds to the 23S rRNA, and is important in its secondary structure. It is located near the subunit interface in the base of the L7/L12 stalk, and near the tRNA binding site of the peptidyltransferase center. The protein is Large ribosomal subunit protein uL6 of Rhodopseudomonas palustris (strain ATCC BAA-98 / CGA009).